We begin with the raw amino-acid sequence, 221 residues long: MIKDAVNTETVEVNPVDQVRSTIYQLLSSLFAKEIDHKILHDLTSEQAQQFWAQLGSEAEFKADVDVLVAELAKLNTDKALLELAADYCGLFLVGTKYSASPYASLYLDDKPAKKGDEPLLFGEQHQQMTQFLKQSQLQVQSEFPEPADHLAVILAYVAHLCTHSDEAEQHSFIKANLANWLGNFVAKVTEVDTGNFYQALARLTYSWVKSDAEWLESELN.

Belongs to the TorD/DmsD family. TorD subfamily.

The protein resides in the cytoplasm. Functionally, involved in the biogenesis of TorA. Acts on TorA before the insertion of the molybdenum cofactor and, as a result, probably favors a conformation of the apoenzyme that is competent for acquiring the cofactor. The protein is Chaperone protein TorD of Shewanella pealeana (strain ATCC 700345 / ANG-SQ1).